Here is a 436-residue protein sequence, read N- to C-terminus: Trigger factor (436 aa).

The PPIase FKBP-type domain maps to 161–246 (GDQVNIDFVG…VNSVAAPQLP (86 aa)).

This sequence belongs to the FKBP-type PPIase family. Tig subfamily.

The protein localises to the cytoplasm. It carries out the reaction [protein]-peptidylproline (omega=180) = [protein]-peptidylproline (omega=0). Its function is as follows. Involved in protein export. Acts as a chaperone by maintaining the newly synthesized protein in an open conformation. Functions as a peptidyl-prolyl cis-trans isomerase. This is Trigger factor from Stutzerimonas stutzeri (strain A1501) (Pseudomonas stutzeri).